The following is a 186-amino-acid chain: Cytochrome c oxidase polypeptide 5, mitochondrial (186 aa).

The N-terminal 20 residues, 1–20 (MYLSKIICKKVPMKLLCTRN), are a transit peptide targeting the mitochondrion. Topologically, residues 21-107 (AATVSAAATN…GPRAFSHISQ (87 aa)) are mitochondrial matrix. Residues 108–128 (KTVFWGTVAGLTIGVVLFGLI) traverse the membrane as a helical segment. At 129–186 (RTQAAPSPRTMTREWQEKSNEYMKENKINPISGEASEGFKGRGQISGGIFSPSEKDKK) the chain is on the mitochondrial intermembrane side. The segment at 149–186 (EYMKENKINPISGEASEGFKGRGQISGGIFSPSEKDKK) is disordered.

This sequence belongs to the cytochrome c oxidase IV family. In terms of assembly, component of the cytochrome c oxidase (complex IV, CIV), a multisubunit enzyme composed of a catalytic core of 3 subunits and seevral supernumerary subunits. The complex exists as a monomer or a dimer and forms supercomplexes (SCs) in the inner mitochondrial membrane with ubiquinol-cytochrome c oxidoreductase (cytochrome b-c1 complex, complex III, CIII).

The protein localises to the mitochondrion inner membrane. Its pathway is energy metabolism; oxidative phosphorylation. Its function is as follows. Component of the cytochrome c oxidase, the last enzyme in the mitochondrial electron transport chain which drives oxidative phosphorylation. The respiratory chain contains 3 multisubunit complexes succinate dehydrogenase (complex II, CII), ubiquinol-cytochrome c oxidoreductase (cytochrome b-c1 complex, complex III, CIII) and cytochrome c oxidase (complex IV, CIV), that cooperate to transfer electrons derived from NADH and succinate to molecular oxygen, creating an electrochemical gradient over the inner membrane that drives transmembrane transport and the ATP synthase. Cytochrome c oxidase is the component of the respiratory chain that catalyzes the reduction of oxygen to water. Electrons originating from reduced cytochrome c in the intermembrane space (IMS) are transferred via the dinuclear copper A center (CU(A)) of subunit 2 and heme A of subunit 1 to the active site in subunit 1, a binuclear center (BNC) formed by heme A3 and copper B (CU(B)). The BNC reduces molecular oxygen to 2 water molecules using 4 electrons from cytochrome c in the IMS and 4 protons from the mitochondrial matrix. The protein is Cytochrome c oxidase polypeptide 5, mitochondrial (cox5) of Schizosaccharomyces pombe (strain 972 / ATCC 24843) (Fission yeast).